The following is a 40-amino-acid chain: Putative NAD(P)-dependent glyceraldehyde-3-phosphate dehydrogenase PS5 (40 aa).

The polypeptide is Putative NAD(P)-dependent glyceraldehyde-3-phosphate dehydrogenase PS5 (Pinus strobus (Eastern white pine)).